The sequence spans 548 residues: Chaperonin GroEL (548 aa).

ATP contacts are provided by residues 30–33, Lys-51, 87–91, Gly-415, 479–481, and Asp-495; these read TLGP, DGTTT, and NAA. A disordered region spans residues 525–548; sequence PKEDKTSDASSSPAGGMGGMGGMM. A compositionally biased stretch (gly residues) spans 539 to 548; it reads GGMGGMGGMM.

Belongs to the chaperonin (HSP60) family. Forms a cylinder of 14 subunits composed of two heptameric rings stacked back-to-back. Interacts with the co-chaperonin GroES.

Its subcellular location is the cytoplasm. The enzyme catalyses ATP + H2O + a folded polypeptide = ADP + phosphate + an unfolded polypeptide.. Together with its co-chaperonin GroES, plays an essential role in assisting protein folding. The GroEL-GroES system forms a nano-cage that allows encapsulation of the non-native substrate proteins and provides a physical environment optimized to promote and accelerate protein folding. This is Chaperonin GroEL from Buchnera aphidicola subsp. Rhopalosiphum maidis.